The primary structure comprises 388 residues: Xylose isomerase (388 aa).

Catalysis depends on residues His-54 and Asp-57. Mg(2+) is bound by residues Glu-181, Glu-217, His-220, Asp-245, Asp-255, Asp-257, and Asp-287.

The protein belongs to the xylose isomerase family. In terms of assembly, homotetramer. Requires Mg(2+) as cofactor.

Its subcellular location is the cytoplasm. It catalyses the reaction alpha-D-xylose = alpha-D-xylulofuranose. This is Xylose isomerase from Streptomyces thermocyaneoviolaceus.